A 1553-amino-acid polypeptide reads, in one-letter code: Mediator of RNA polymerase II transcription subunit 14 (1553 aa).

Short sequence motifs (LXXLL motif) lie at residues 55–59 (LAELL) and 472–476 (LPALL). Ser615 bears the Phosphoserine mark. Disordered stretches follow at residues 699–723 (FATQQQQQQGAPAVAGENKPSGTSG), 1006–1199 (ASHE…LNRP), and 1513–1553 (GVGS…GGPQ). Position 1015 is a phosphoserine (Ser1015). Low complexity-rich tracts occupy residues 1024–1039 (GGPSSVAGVSAGGSSP) and 1065–1080 (PSSSNPHTPASPHPSA). Positions 1081 to 1090 (GAGGGSGPQG) are enriched in gly residues. The span at 1099-1108 (PPAPHMPHPS) shows a compositional bias: pro residues. Positions 1131–1155 (GPNTLYMQSHQDSPFTAMSPANNNW) are enriched in polar residues. Residues 1159–1169 (PSMPRPSPRPG) show a composition bias toward pro residues. Residues 1177-1193 (TGGGAGVAGGTDRGGSR) show a composition bias toward gly residues. Residues 1515–1534 (GSSPNPMMPMQQLPQQVGPQ) show a composition bias toward low complexity.

It belongs to the Mediator complex subunit 14 family. In terms of assembly, component of the Mediator complex, which may include CDK8, MED4, MED6, MED11, MED14, MED17, MED18, MED20, MED21, MED22, MED27, MED28, MED30 and MED31.

The protein resides in the nucleus. Functionally, component of the Mediator complex, a coactivator involved in the regulated transcription of nearly all RNA polymerase II-dependent genes. Mediator functions as a bridge to convey information from gene-specific regulatory proteins to the basal RNA polymerase II transcription machinery. Mediator is recruited to promoters by direct interactions with regulatory proteins and serves as a scaffold for the assembly of a functional pre-initiation complex with RNA polymerase II and the general transcription factors. Required for activated transcription of the MtnA, MtnB and MtnD genes. This chain is Mediator of RNA polymerase II transcription subunit 14 (MED14), found in Drosophila melanogaster (Fruit fly).